The primary structure comprises 93 residues: Integration host factor subunit beta (93 aa).

Belongs to the bacterial histone-like protein family. As to quaternary structure, heterodimer of an alpha and a beta chain.

Its function is as follows. This protein is one of the two subunits of integration host factor, a specific DNA-binding protein that functions in genetic recombination as well as in transcriptional and translational control. The sequence is that of Integration host factor subunit beta from Cereibacter sphaeroides (strain KD131 / KCTC 12085) (Rhodobacter sphaeroides).